We begin with the raw amino-acid sequence, 337 residues long: Ferrochelatase (337 aa).

Residues H189 and E293 each coordinate Fe cation.

The protein belongs to the ferrochelatase family.

The protein localises to the cytoplasm. The catalysed reaction is heme b + 2 H(+) = protoporphyrin IX + Fe(2+). It participates in porphyrin-containing compound metabolism; protoheme biosynthesis; protoheme from protoporphyrin-IX: step 1/1. Catalyzes the ferrous insertion into protoporphyrin IX. This chain is Ferrochelatase, found in Pseudomonas entomophila (strain L48).